A 313-amino-acid polypeptide reads, in one-letter code: Olfactory receptor 8B3 (313 aa).

At 1-25 (MLARNNSLVTEFILAGLTDHPEFQQ) the chain is on the extracellular side. Residue Asn-5 is glycosylated (N-linked (GlcNAc...) asparagine). Residues 26-46 (PLFFLFLVVYIVTMVGNLGLI) form a helical membrane-spanning segment. The Cytoplasmic portion of the chain corresponds to 47 to 54 (ILFGLNSH). A helical transmembrane segment spans residues 55–75 (LHTPMYYFLFNLSFIDLCYSS). Topologically, residues 76–99 (VFTPKMLMNFVSKKNIISYVGCMT) are extracellular. A disulfide bridge connects residues Cys-97 and Cys-189. Residues 100 to 120 (QLFFFLFFVISECYMLTSMAY) form a helical membrane-spanning segment. Topologically, residues 121 to 139 (DRYVAICNPLLYKVTMSHQ) are cytoplasmic. Residues 140-160 (VCSMLTFAAYIMGLAGATAHT) form a helical membrane-spanning segment. Residues 161 to 197 (GCMLRLTFCSANIINHYLCDILPLLQLSCTSTYVNEV) are Extracellular-facing. The helical transmembrane segment at 198 to 217 (VVLIVVGINIMVPSCTILIS) threads the bilayer. Residues 218–237 (YVFIVTSILHIKSTQGRSKA) lie on the Cytoplasmic side of the membrane. Residues 238–258 (FSTCSSHVIALSLFFGSAAFM) form a helical membrane-spanning segment. At 259–270 (YIKYSSGSMEQG) the chain is on the extracellular side. The helical transmembrane segment at 271 to 291 (KVSSVFYTNVVPMLNPLIYSL) threads the bilayer. At 292 to 313 (RNKDVKVALRKALIKIQRRNIF) the chain is on the cytoplasmic side.

It belongs to the G-protein coupled receptor 1 family.

The protein localises to the cell membrane. Its function is as follows. Odorant receptor. In Homo sapiens (Human), this protein is Olfactory receptor 8B3 (OR8B3).